A 143-amino-acid chain; its full sequence is Transcriptional regulator MraZ (143 aa).

2 consecutive SpoVT-AbrB domains span residues 5–47 and 76–119; these read EFLH…PMDE and AIEC…ANDA.

Belongs to the MraZ family. As to quaternary structure, forms oligomers.

It localises to the cytoplasm. The protein localises to the nucleoid. The sequence is that of Transcriptional regulator MraZ from Oceanobacillus iheyensis (strain DSM 14371 / CIP 107618 / JCM 11309 / KCTC 3954 / HTE831).